Consider the following 954-residue polypeptide: Protein translocase subunit SecA (954 aa).

ATP contacts are provided by residues Q86, 104–108 (GEGKT), and D494. Residues 520-549 (LDPDNPLGSASTTSRGGGQGFGPASPKPKK) are disordered.

The protein belongs to the SecA family. In terms of assembly, monomer and homodimer. Part of the essential Sec protein translocation apparatus which comprises SecA, SecYEG and auxiliary proteins SecDF. Other proteins may also be involved.

The protein resides in the cell inner membrane. It is found in the cellular thylakoid membrane. Its subcellular location is the cytoplasm. The catalysed reaction is ATP + H2O + cellular proteinSide 1 = ADP + phosphate + cellular proteinSide 2.. Part of the Sec protein translocase complex. Interacts with the SecYEG preprotein conducting channel. Has a central role in coupling the hydrolysis of ATP to the transfer of proteins into and across the cell membrane, serving as an ATP-driven molecular motor driving the stepwise translocation of polypeptide chains across the membrane. Its function is as follows. Probably participates in protein translocation into and across both the cytoplasmic and thylakoid membranes in cyanobacterial cells. This chain is Protein translocase subunit SecA, found in Synechococcus sp. (strain JA-3-3Ab) (Cyanobacteria bacterium Yellowstone A-Prime).